A 758-amino-acid polypeptide reads, in one-letter code: Spastin (758 aa).

Residues 1–103 (MVRTKNQSSS…SPRSGHHHSY (103 aa)) form a disordered region. At 1–121 (MVRTKNQSSS…KQNLYVVSFP (121 aa)) the chain is on the cytoplasmic side. Residues 1–210 (MVRTKNQSSS…RPIQPLEMAA (210 aa)) form a required for localization to punctate cytoplasmic foci region. Low complexity-rich tracts occupy residues 8–28 (SSSSSASSSSTKSPIKSSSGA), 43–58 (RSSSASNVAAVVAGGS), 66–76 (SSNRRSPGSSP), and 85–95 (TDDLTPTTCSP). The segment at residues 122–142 (IIFLFNVLRSLIYQLFCIFRY) is an intramembrane region (helical). Residues 143–758 (LYGASTKVIY…WSQDYGDITI (616 aa)) are Cytoplasmic-facing. 2 stretches are compositionally biased toward polar residues: residues 169-180 (SKEQQQSLNHPS) and 189-198 (QEQQLSNQPQ). Residues 169–202 (SKEQQQSLNHPSELNREGDGQEQQLSNQPQRFRP) form a disordered region. A sufficient for interaction with microtubules and microtubule severing region spans residues 208 to 758 (MAANRPGGGY…WSQDYGDITI (551 aa)). Positions 233 to 308 (HRRAFEYISK…SMARDRLHFL (76 aa)) constitute an MIT domain. Positions 323–339 (KEKQKEEARSKPQKSRE) are enriched in basic and acidic residues. A disordered region spans residues 323 to 454 (KEKQKEEARS…GPSGSGASTP (132 aa)). Composition is skewed to polar residues over residues 390 to 406 (NKSQTLPRNLGSKTSVG) and 425 to 454 (QFSSGRNTPPQRSRTPINNNGPSGSGASTP). The required for interaction with microtubules stretch occupies residues 443 to 455 (NNGPSGSGASTPV). 523–530 (GPPGNGKT) is a binding site for ATP.

It belongs to the AAA ATPase family. Spastin subfamily. Homohexamer. The homohexamer is stabilized by ATP-binding. The homohexamer may adopt a ring conformation through which microtubules pass prior to being severed. Interacts with microtubules. Interacts with atl; may be involved in microtubule dynamics.

The protein localises to the membrane. Its subcellular location is the cytoplasm. It is found in the cytoskeleton. The protein resides in the microtubule organizing center. It localises to the centrosome. The protein localises to the chromosome. Its subcellular location is the lipid droplet. The catalysed reaction is n ATP + n H2O + a microtubule = n ADP + n phosphate + (n+1) alpha/beta tubulin heterodimers.. Its function is as follows. ATP-dependent microtubule severing protein. Stimulates microtubule minus-end depolymerization and poleward microtubule flux in the mitotic spindle. Regulates microtubule stability in the neuromuscular junction synapse. Involved in lipid metabolism by regulating the size and distribution of lipid droplets. Involved in axon regeneration by regulating microtubule severing. The polypeptide is Spastin (Drosophila simulans (Fruit fly)).